We begin with the raw amino-acid sequence, 110 residues long: Large ribosomal subunit protein uL22 (110 aa).

The protein belongs to the universal ribosomal protein uL22 family. In terms of assembly, part of the 50S ribosomal subunit.

Functionally, this protein binds specifically to 23S rRNA; its binding is stimulated by other ribosomal proteins, e.g. L4, L17, and L20. It is important during the early stages of 50S assembly. It makes multiple contacts with different domains of the 23S rRNA in the assembled 50S subunit and ribosome. The globular domain of the protein is located near the polypeptide exit tunnel on the outside of the subunit, while an extended beta-hairpin is found that lines the wall of the exit tunnel in the center of the 70S ribosome. The protein is Large ribosomal subunit protein uL22 of Syntrophobacter fumaroxidans (strain DSM 10017 / MPOB).